A 153-amino-acid chain; its full sequence is Small ribosomal subunit protein bS16 (153 aa).

The interval 114-153 (ENEPVGEAITPKKKKAKAEDAEAAADAPAEAAAESEAADK) is disordered. The segment covering 137–153 (AADAPAEAAAESEAADK) has biased composition (low complexity).

It belongs to the bacterial ribosomal protein bS16 family.

In Rhodococcus opacus (strain B4), this protein is Small ribosomal subunit protein bS16.